The following is a 435-amino-acid chain: MTPQIKTHLLPKQEPSSSENHGSSTSGIVFNVSTSIIGAGIMSMPAAFKVLGIVPAFLIITIIAWLSTISVGFLMKSTLAGESTTYAGVMKESFGKTGSIAVQIATMVATFGCMIIFSIIIGDVLSGNENGGPEHIGVLQEWFGSYWWNTRIFALLFVYGFVLLPLVLRRRVERLAISSAVSFLLAVLFVVISSVLAISALVNGQTKNPRLFPELSNGGSFWQLFTASPVIVTAFTFHFNVHPIGFELKDPLQVIPATKISVILCAAIYFATGLFGYLLFGDATMSDILVNFDQSSGSSIGSLLNDIVRLSYVLHLMLVFPLLNFSLRANLDELLYPKKPSLEKDTKRFIGLTLALLICCFLSAIAVPDIWYFFQFMGSTITVSIAFIFPAAIVLRNIHGVSTSREKIVAAIMLVLAVATSIIAISTNLYSLAAN.

The tract at residues 1 to 24 (MTPQIKTHLLPKQEPSSSENHGSS) is disordered. 11 helical membrane passes run 28–48 (IVFN…PAAF), 53–73 (IVPA…SVGF), 100–120 (IAVQ…FSII), 148–168 (WNTR…PLVL), 181–201 (VSFL…ISAL), 219–239 (GSFW…TFHF), 260–280 (ISVI…YLLF), 307–327 (IVRL…NFSL), 354–374 (LALL…WYFF), 375–395 (QFMG…AIVL), and 408–428 (IVAA…ISTN).

It belongs to the amino acid/polyamine transporter 2 family. Amino acid/auxin permease (AAAP) (TC 2.A.18.6) subfamily.

The protein resides in the membrane. The chain is Amino acid transporter AVT6C from Arabidopsis thaliana (Mouse-ear cress).